Consider the following 54-residue polypeptide: Large ribosomal subunit protein bL33A (54 aa).

The protein belongs to the bacterial ribosomal protein bL33 family.

This chain is Large ribosomal subunit protein bL33A, found in Streptomyces griseus subsp. griseus (strain JCM 4626 / CBS 651.72 / NBRC 13350 / KCC S-0626 / ISP 5235).